The chain runs to 59 residues: UPF0181 protein YoaH (59 aa).

Belongs to the UPF0181 family.

This chain is UPF0181 protein YoaH, found in Escherichia coli O127:H6 (strain E2348/69 / EPEC).